The primary structure comprises 564 residues: MSDQLQMTDGMHIIVEALKQNNIDTIYGVVGIPVTDMARHAQAEGIRYIGFRHEQSAGYAAAASGFLTQKPGICLTVSAPGFLNGLTALANATVNGFPMIMISGSSDRAIVDLQQGDYEELDQMNAAKPYAKAAFRVNQPQDLGIALARAIRVSVSGRPGGVYLDLPANVLAATMEKDEALTTIVKVENPSPALLPCPKSVTSAISLLAKAERPLIILGKGAAYSQADEQLREFIESAQIPFLPMSMAKGILEDTHPLSAAAARSFALANADVVMLVGARLNWLLAHGKKGWAADTQFIQLDIEPQEIDSNRPIAVPVVGDIASSMQGMLAELKQNTFTTPLVWRDILNIHKQQNAQKMHEKLSTDTQPLNYFNALSAVRDVLRENQDIYLVNEGANTLDNARNIIDMYKPRRRLDCGTWGVMGIGMGYAIGASVTSGSPVVAIEGDSAFGFSGMEIETICRYNLPVTIVIFNNGGIYRGDGVDLSGAGAPSPTDLLHHARYDKLMDAFRGVGYNVTTTDELRHALTTGIQSRKPTIINVVIDPAAGTESGHITKLNPKQVAGN.

Substrate contacts are provided by Ile32 and Tyr118. Residues Arg158 and Lys220 each coordinate ADP. Residue 261–265 participates in substrate binding; it reads AAARS. ADP contacts are provided by Arg280, Asp302, and Ile322. Residue Asn355 participates in substrate binding. Residues Tyr372 and 396-398 each bind thiamine diphosphate; that span reads ANT. A substrate-binding site is contributed by 403 to 404; that stretch reads RN. 421 to 423 contacts thiamine diphosphate; it reads GVM. Asp447 is a binding site for Mg(2+). 448–449 is a binding site for thiamine diphosphate; the sequence is SA. Asn474 and Gly476 together coordinate Mg(2+). Tyr478 serves as a coordination point for thiamine diphosphate. Substrate is bound at residue 550–552; the sequence is SGH.

Belongs to the TPP enzyme family. Homotetramer; dimer of dimers. Mg(2+) is required as a cofactor. Thiamine diphosphate serves as cofactor.

The enzyme catalyses oxalyl-CoA + H(+) = formyl-CoA + CO2. The protein operates within metabolic intermediate degradation; oxalate degradation; CO(2) and formate from oxalate: step 2/2. Its function is as follows. Involved in the catabolism of oxalate and in the adapatation to low pH via the induction of the oxalate-dependent acid tolerance response (ATR). Catalyzes the decarboxylation of oxalyl-CoA to yield carbon dioxide and formyl-CoA. This is Oxalyl-CoA decarboxylase (oxc) from Escherichia coli O157:H7.